We begin with the raw amino-acid sequence, 244 residues long: 5-oxoprolinase subunit A (244 aa).

It belongs to the LamB/PxpA family. In terms of assembly, forms a complex composed of PxpA, PxpB and PxpC.

The enzyme catalyses 5-oxo-L-proline + ATP + 2 H2O = L-glutamate + ADP + phosphate + H(+). Catalyzes the cleavage of 5-oxoproline to form L-glutamate coupled to the hydrolysis of ATP to ADP and inorganic phosphate. This chain is 5-oxoprolinase subunit A, found in Salmonella newport (strain SL254).